Consider the following 188-residue polypeptide: CASP-like protein 4B3 (188 aa).

The disordered stretch occupies residues 1–21; it reads MSFSPASSEPHDAPAAAGSSV. Over 1–42 the chain is Cytoplasmic; sequence MSFSPASSEPHDAPAAAGSSVPASRSIAERWKMEAAPIRARL. The helical transmembrane segment at 43 to 63 threads the bilayer; it reads LLRAFAWLFSLLALVVMATDV. The Extracellular portion of the chain corresponds to 64 to 76; the sequence is HGRGGAQDFSTYP. A helical transmembrane segment spans residues 77–97; it reads EYNYCLGMSIIALLYATAQLV. The Cytoplasmic segment spans residues 98-114; sequence RDAHRLSSGRDLVAGRK. The chain crosses the membrane as a helical span at residues 115–135; the sequence is AAAVVDFAGDQVVAYSLISGL. Topologically, residues 136-156 are extracellular; it reads SAAAPVTDYMRQATDNLFNDS. N154 carries an N-linked (GlcNAc...) asparagine glycan. The helical transmembrane segment at 157–177 threads the bilayer; sequence AAAAISLAFFAFLAISLSALI. The Cytoplasmic segment spans residues 178-188; the sequence is SGYNLSLEAIV.

Belongs to the Casparian strip membrane proteins (CASP) family. As to quaternary structure, homodimer and heterodimers.

The protein resides in the cell membrane. The sequence is that of CASP-like protein 4B3 from Hordeum vulgare subsp. vulgare (Domesticated barley).